Reading from the N-terminus, the 757-residue chain is Protein lsd90 (757 aa).

Composition is skewed to polar residues over residues 1-11 (MVGTINESMQN), 19-36 (TAQS…SSSK), 51-69 (TAGN…SKNL), and 94-118 (DTSN…STYE). Disordered regions lie at residues 1-131 (MVGT…SRSS), 224-244 (ERAR…EKQA), 589-633 (AQAE…KSKS), and 657-757 (AYVG…MSNK). Positions 166–604 (DEKTLQDLLE…KVESEYNSVK (439 aa)) form a coiled coil. The segment covering 589–598 (AQAEQSKVES) has biased composition (basic and acidic residues). Over residues 619–632 (VTTNEPTDVSTKSK) the composition is skewed to polar residues. Residues 674–693 (STPSTLPTSASTNAAATTTT) are compositionally biased toward low complexity. 718–725 (GTTGLGKS) is a binding site for ATP.

In terms of biological role, may be involved in the metabolism of very long-chain fatty acid-containing phospholipids (VLCFA-PL). The sequence is that of Protein lsd90 (lsd90) from Schizosaccharomyces pombe (strain 972 / ATCC 24843) (Fission yeast).